Consider the following 387-residue polypeptide: Formate-dependent phosphoribosylglycinamide formyltransferase (387 aa).

N(1)-(5-phospho-beta-D-ribosyl)glycinamide is bound by residues 21 to 22 and glutamate 81; that span reads EL. ATP is bound by residues arginine 113, lysine 154, 159 to 164, 193 to 196, and glutamate 201; these read SSGHGQ and EEFV. The ATP-grasp domain occupies 118 to 306; sequence VFAAETLDLK…EFALHVRAVL (189 aa). Glutamate 265 and glutamate 277 together coordinate Mg(2+). N(1)-(5-phospho-beta-D-ribosyl)glycinamide-binding positions include aspartate 284, lysine 352, and 359 to 360; that span reads RR.

It belongs to the PurK/PurT family. Homodimer.

The catalysed reaction is N(1)-(5-phospho-beta-D-ribosyl)glycinamide + formate + ATP = N(2)-formyl-N(1)-(5-phospho-beta-D-ribosyl)glycinamide + ADP + phosphate + H(+). It participates in purine metabolism; IMP biosynthesis via de novo pathway; N(2)-formyl-N(1)-(5-phospho-D-ribosyl)glycinamide from N(1)-(5-phospho-D-ribosyl)glycinamide (formate route): step 1/1. Its function is as follows. Involved in the de novo purine biosynthesis. Catalyzes the transfer of formate to 5-phospho-ribosyl-glycinamide (GAR), producing 5-phospho-ribosyl-N-formylglycinamide (FGAR). Formate is provided by PurU via hydrolysis of 10-formyl-tetrahydrofolate. This Sulfurovum sp. (strain NBC37-1) protein is Formate-dependent phosphoribosylglycinamide formyltransferase.